A 1433-amino-acid polypeptide reads, in one-letter code: CAP-Gly domain-containing linker protein 1 (1433 aa).

Residues 1–51 (MSMLKPSGLKAPSKTIKHGSTLLKAPASVATAPAEKAPSSEKSSSTTTADA) are disordered. Over residues 32–49 (APAEKAPSSEKSSSTTTA) the composition is skewed to low complexity. The 43-residue stretch at 79-121 (GETQFAPGQWAGIVLDEPIGKNDGSVAGVRYFQCEPLRGIFTR) folds into the CAP-Gly 1 domain. Residues 133 to 208 (DEANGTQTAH…VSNLSEAGSL (76 aa)) are disordered. The span at 140 to 168 (TAHASRATSPTSTSTASAVSASPAALLPS) shows a compositional bias: low complexity. The span at 184 to 204 (TPSQFSNLSKTASGSVSNLSE) shows a compositional bias: polar residues. A CAP-Gly 2 domain is found at 235–277 (GETDFAKGEWCGVELDEPLGKNDGAVAGTRYFQCQPRYGLFAP). Positions 319 to 333 (SLSSVASSVSSKPSR) are enriched in low complexity. Positions 319–338 (SLSSVASSVSSKPSRTGLLT) are disordered. Positions 351–1353 (TTALQEALKE…CEAALNGNEE (1003 aa)) form a coiled coil. The CCHC-type zinc-finger motif lies at 1412–1429 (PYCDTCEMFGHWTADCND).

Its subcellular location is the cytoplasm. It is found in the cytoskeleton. The protein resides in the cytoplasmic vesicle membrane. It localises to the cell projection. The protein localises to the ruffle. Binds to the plus end of microtubules and regulates the dynamics of the microtubule cytoskeleton. Promotes microtubule growth and microtubule bundling. Links cytoplasmic vesicles to microtubules and thereby plays an important role in intracellular vesicle trafficking. Plays a role macropinocytosis and endosome trafficking. This chain is CAP-Gly domain-containing linker protein 1 (CLIP1), found in Gallus gallus (Chicken).